The primary structure comprises 314 residues: MENNTEVSEFILLGLTNAPELQVPLFIMFTLIYLITLTGNLGMIILILLDSHLHTPMYFFLSNLSLAGIGYSSAVTPKVLTGLLIEDKAISYSACAAQMFFCAVFATVENYLLSSMAYDRYAAVCNPLHYTTTMTTRVCACLAIGCYVIGFLNASIQIGDTFRLSFCMSNVIHHFFCDKPAVITLTCSEKHISELILVLISSFNVFFALLVTLISYLFILITILKRHTGKGYQKPLSTCGSHLIAIFLFYITVIIMYIRPSSSHSMDTDKIASVFYTMIIPMLSPIVYTLRNKDVKNAFMKVVEKAKYSLDSVF.

Over Met-1–Val-23 the chain is Extracellular. Asn-3 carries an N-linked (GlcNAc...) asparagine glycan. A helical membrane pass occupies residues Pro-24–Ile-44. The Cytoplasmic portion of the chain corresponds to Ile-45–His-52. A helical membrane pass occupies residues Leu-53 to Ser-73. Over Ala-74–Ala-97 the chain is Extracellular. Cysteines 95 and 187 form a disulfide. A helical membrane pass occupies residues Gln-98 to Tyr-118. Topologically, residues Asp-119–Arg-137 are cytoplasmic. The helical transmembrane segment at Val-138–Ile-158 threads the bilayer. At Gly-159–Glu-194 the chain is on the extracellular side. A helical transmembrane segment spans residues Leu-195–Ser-215. Over Tyr-216–Pro-235 the chain is Cytoplasmic. Residues Leu-236–Met-256 form a helical membrane-spanning segment. Residues Tyr-257–Asp-269 lie on the Extracellular side of the membrane. Residues Lys-270–Leu-290 form a helical membrane-spanning segment. Residues Arg-291–Phe-314 lie on the Cytoplasmic side of the membrane.

It belongs to the G-protein coupled receptor 1 family.

It localises to the cell membrane. In terms of biological role, odorant receptor. The chain is Olfactory receptor 5B17 (OR5B17) from Homo sapiens (Human).